The chain runs to 434 residues: UDP-N-acetylglucosamine 1-carboxyvinyltransferase (434 aa).

22-23 is a binding site for phosphoenolpyruvate; sequence KN. A UDP-N-acetyl-alpha-D-glucosamine-binding site is contributed by Arg-97. Asp-121 serves as the catalytic Proton donor. UDP-N-acetyl-alpha-D-glucosamine is bound by residues Asp-319 and Met-341.

Belongs to the EPSP synthase family. MurA subfamily.

The protein resides in the cytoplasm. It catalyses the reaction phosphoenolpyruvate + UDP-N-acetyl-alpha-D-glucosamine = UDP-N-acetyl-3-O-(1-carboxyvinyl)-alpha-D-glucosamine + phosphate. Its pathway is cell wall biogenesis; peptidoglycan biosynthesis. Cell wall formation. Adds enolpyruvyl to UDP-N-acetylglucosamine. This chain is UDP-N-acetylglucosamine 1-carboxyvinyltransferase, found in Bacteroides fragilis (strain ATCC 25285 / DSM 2151 / CCUG 4856 / JCM 11019 / LMG 10263 / NCTC 9343 / Onslow / VPI 2553 / EN-2).